Here is a 500-residue protein sequence, read N- to C-terminus: Beta-glucosidase 30 (500 aa).

An N-terminal signal peptide occupies residues 1-25 (MGIRMGRRLLFTLFLGALFCNGVYA). Residue Gln-46 participates in a beta-D-glucoside binding. Asn-63 and Asn-114 each carry an N-linked (GlcNAc...) asparagine glycan. A beta-D-glucoside contacts are provided by residues His-149 and 194 to 195 (NE). Catalysis depends on Glu-195, which acts as the Proton donor. A disulfide bond links Cys-214 and Cys-222. Tyr-338 lines the a beta-D-glucoside pocket. Asn-363 carries an N-linked (GlcNAc...) asparagine glycan. A beta-D-glucoside is bound at residue Glu-409. Residue Glu-409 is the Nucleophile of the active site. Asn-416 and Asn-417 each carry an N-linked (GlcNAc...) asparagine glycan. Residues Trp-456, 463 to 464 (EW), and Phe-472 each bind a beta-D-glucoside.

The protein belongs to the glycosyl hydrolase 1 family.

It catalyses the reaction Hydrolysis of terminal, non-reducing beta-D-glucosyl residues with release of beta-D-glucose.. The protein is Beta-glucosidase 30 (BGLU30) of Oryza sativa subsp. japonica (Rice).